Consider the following 181-residue polypeptide: MFGLKQFYQNEVRIKLAQELDIKNPMLLPKLEKIVISVGAGAYAKDMKIMQNIAQTISLIAGQKAVITKAKKSVAGFKIREGMAVGAKVTLRNKRMYNFLEKLIVISLPRVKDFRGISRNGFDGRGNYTFGINEQLIFPEVVYDDIMVSHGMNITMVTSTDNDKEAFKLLELLGLPFAKVR.

The protein belongs to the universal ribosomal protein uL5 family. In terms of assembly, part of the 50S ribosomal subunit; part of the 5S rRNA/L5/L18/L25 subcomplex. Contacts the 5S rRNA and the P site tRNA. Forms a bridge to the 30S subunit in the 70S ribosome.

In terms of biological role, this is one of the proteins that bind and probably mediate the attachment of the 5S RNA into the large ribosomal subunit, where it forms part of the central protuberance. In the 70S ribosome it contacts protein S13 of the 30S subunit (bridge B1b), connecting the 2 subunits; this bridge is implicated in subunit movement. Contacts the P site tRNA; the 5S rRNA and some of its associated proteins might help stabilize positioning of ribosome-bound tRNAs. This is Large ribosomal subunit protein uL5 from Helicobacter pylori (strain HPAG1).